Consider the following 611-residue polypeptide: Menin (611 aa).

The interval 214 to 390 is interaction with FANCD2; sequence GVAERSWLYL…SLLETGEERT (177 aa). A disordered region spans residues 460-553; the sequence is REAEAAEAEE…SPPPEGPVLT (94 aa). Positions 484 to 500 are enriched in basic and acidic residues; sequence RRESKPEEPPPPKKPAL. Residues Ser487 and Ser544 each carry the phosphoserine modification. A Phosphothreonine modification is found at Thr595.

As to quaternary structure, component of the MLL-HCF complex, at least composed of KMT2A/MLL1, MEN1, ASH2L, RBBP5, DPY30, WDR5, HCFC1 and HCFC2. Component of the menin-associated histone methyltransferase complex, at least composed of KMT2B/MLL4, MEN1, ASH2L, RBBP5, DPY30 and WDR5. Interacts with POLR2B. Interacts with POLR2A phosphorylated at 'Ser-5', but not with the unphosphorylated, nor 'Ser-2' phosphorylated POLR2A forms. Interacts with FANCD2 and DBF4. Interacts with SMAD3, but not with SMAD2, nor SMAD4. Directly interacts with NFKB1, NFKB2 and RELA. Interacts with JUND (via MBM motif); inhibits the interaction of JUND with MAPK10 and the phosphorylation of JUND by MAP kinases MAPK8 and MAPK10. Interacts with KMT2A (via MBM motif). The KMT2A-MEN1 complex interacts with PSIP1 with a greater affinity as MEN1 enhances interaction of KMT2A with PSIP1. Widely expressed, with high levels in hippocampus, cerebral cortex, testis and thymus (at protein level). Also expressed at high levels in pancreatic islets, ovary and bone marrow. In the brain, highest expression in hippocampus pyramidal nerve cells (at protein level). In the testis, may be expressed in spermatogonia (at protein level). Low expression, if any, in skeletal muscle.

It is found in the nucleus. In terms of biological role, essential component of a MLL/SET1 histone methyltransferase (HMT) complex, a complex that specifically methylates 'Lys-4' of histone H3 (H3K4). Functions as a transcriptional regulator. Binds to the TERT promoter and represses telomerase expression. Plays a role in TGFB1-mediated inhibition of cell-proliferation, possibly regulating SMAD3 transcriptional activity. Represses JUND-mediated transcriptional activation on AP1 sites, as well as that mediated by NFKB subunit RELA. Positively regulates HOXC8 and HOXC6 gene expression. May be involved in normal hematopoiesis through the activation of HOXA9 expression. May be involved in DNA repair. In Mus musculus (Mouse), this protein is Menin (Men1).